The following is a 1039-amino-acid chain: uncharacterized protein (1039 aa).

Residues 1–28 form the signal peptide; the sequence is MKLFPRTLLKILVVSFILNFGVTSKSYA. The next 6 membrane-spanning stretches (helical) occupy residues 326 to 346, 354 to 374, 387 to 407, 491 to 511, 517 to 537, and 551 to 571; these read IVTA…LLAG, YINF…LNIT, MIQW…SWVM, MLVS…AFMV, CMVS…MFLF, and MISF…MFSV. The interval 654-680 is disordered; that stretch reads KPNQTCDPKAADADTKCNPKPGDSSTS. A helical membrane pass occupies residues 710–730; that stretch reads IKDILLALVTACFTLYLMYNF. 3 disordered regions span residues 799–875, 917–949, and 1004–1039; these read LVKG…PTTV, IKEA…LDEN, and LYRS…DENP. Over residues 802-811 the composition is skewed to gly residues; that stretch reads GSGGGGGSEG. Residues 812-836 show a composition bias toward low complexity; it reads GDSFTSGGLRETSSTAATPSSALSS. Polar residues predominate over residues 843–861; that stretch reads GTATPSSASEEMLDTSFSN. Composition is skewed to basic and acidic residues over residues 917–939 and 1004–1033; these read IKEA…HTTE and LYRS…KIDS.

It belongs to the TrbL/VirB6 family.

Its subcellular location is the cell membrane. This is an uncharacterized protein from Rickettsia bellii (strain RML369-C).